The sequence spans 157 residues: Phosphopantetheine adenylyltransferase (157 aa).

T10 lines the substrate pocket. ATP-binding positions include 10 to 11 (TF) and H18. Substrate-binding residues include K42, L74, and R88. Residues 89–91 (GLR), E99, and 124–130 (NAFISSS) each bind ATP.

The protein belongs to the bacterial CoaD family. As to quaternary structure, homohexamer. Requires Mg(2+) as cofactor.

The protein resides in the cytoplasm. It carries out the reaction (R)-4'-phosphopantetheine + ATP + H(+) = 3'-dephospho-CoA + diphosphate. The protein operates within cofactor biosynthesis; coenzyme A biosynthesis; CoA from (R)-pantothenate: step 4/5. With respect to regulation, tightly binds to CoA, which is presumably a feedback inhibitor. Potently inhibited by D-amethopterin, which simultaneously occupies the 4'-phosphopantetheine- and ATP-binding sites; following treatment with D-amethopterin, H.pylori exhibits morphological characteristics associated with cell death, showing that D-amethopterin displays antimicrobial activity. Its function is as follows. Reversibly transfers an adenylyl group from ATP to 4'-phosphopantetheine, yielding dephospho-CoA (dPCoA) and pyrophosphate. The chain is Phosphopantetheine adenylyltransferase from Helicobacter pylori (strain ATCC 700392 / 26695) (Campylobacter pylori).